An 876-amino-acid polypeptide reads, in one-letter code: Alanine--tRNA ligase (876 aa).

4 residues coordinate Zn(2+): His564, His568, Cys666, and His670.

This sequence belongs to the class-II aminoacyl-tRNA synthetase family. In terms of assembly, homotetramer. It depends on Zn(2+) as a cofactor.

It localises to the cytoplasm. The enzyme catalyses tRNA(Ala) + L-alanine + ATP = L-alanyl-tRNA(Ala) + AMP + diphosphate. Catalyzes the attachment of alanine to tRNA(Ala) in a two-step reaction: alanine is first activated by ATP to form Ala-AMP and then transferred to the acceptor end of tRNA(Ala). Also edits incorrectly charged Ser-tRNA(Ala) and Gly-tRNA(Ala) via its editing domain. This is Alanine--tRNA ligase from Salmonella paratyphi B (strain ATCC BAA-1250 / SPB7).